Here is a 187-residue protein sequence, read N- to C-terminus: Choriogonadotropin subunit beta variant 1 (187 aa).

A signal peptide spans 1 to 50; the sequence is MSTFPVLAEDIPLRERHVKGRVDPHFRAPKMEMFQRLLLLLLLSMGGTWA. Cystine bridges form between Cys-59/Cys-107, Cys-73/Cys-122, Cys-76/Cys-160, Cys-84/Cys-138, Cys-88/Cys-140, and Cys-143/Cys-150. Asn-63 and Asn-80 each carry an N-linked (GlcNAc...) asparagine glycan. The interval 161 to 187 is disordered; that stretch reads DDPRFQDSSSSKAPPPSLPSPSRLPGP. Positions 173–187 are enriched in pro residues; sequence APPPSLPSPSRLPGP.

It belongs to the glycoprotein hormones subunit beta family. In terms of tissue distribution, expressed in placenta, testis and pituitary.

The protein localises to the secreted. This is Choriogonadotropin subunit beta variant 1 (CGB1) from Homo sapiens (Human).